The chain runs to 1100 residues: MTPTSLARARPTSSHRWVPAAAGWIVGVIATLSLLASVSPLVRSLIRVPREWVDDYIFNFPDTSFAWAFVLALLAAALAARKRIAWWILVGYMIAAAGWNIAGLAEGRERWFAEVGEVIGLAFHLAAIAFLLLARKEFWARVRRGALLKAAATLVASMAVGTLIGWGLLELFPGSLARSDRFLYALNRVSAFAGADAASFSGHPHVFVNALLGLFGAVALMVTAIVLFQSQRADNALTGEDESAIRGLLELYGKNDSLGYFATRRDKAVVFAPSGRAAITYRVEVGVCLASGDPVGDPRSWPQAIDAWLKLCQAYGWAPGVMGASAAGAQAFREAGLNALQLGDEAILHPEDFRLSGPDMRAVRQAVTRARRAGATVRIRRHRELPADEMAAVIERADAWRDTDDERGFSMALGRLGDPADGDCLLVEAVQADQVVAMLSLVPWGGNGVSLDLMRRSPQSPNGTIELMVSELCMQSEDIGITRISLNFAMFRSAFEQGAQLGAGPVARLWRWLLVFFSRWWQLETLYRSNMKYQPEWVPRYACYDDARLVPRVGVASVIAEGFLVLPFSRRHEQPHTGHHIAAPGTLVATGLLHSDGTAPDGMGLQADLADDDQPRLPEQVRVRMAKLKALQAQGVDAYPVANPPSHTVAQALAAEDGADVAVAGRVLRSRDYGGVLFAQLRDWSGETQLVLDNSLLADGSTADFTRTIDLGDLIEVTGTMGRSRSGKWSLLVSGWRLIGKCLRPLPDKWKGLTDQEARVRARYVDLAVNTDARELIRARSAVLHAIRETLVAKDFLEVETPILQQIHGGANARPFLTHINAYDLDLYLRIAPELYLKRLCVGGVERVFELGRAFRNEGVDFSHNPEFTLLEAYQAHADYHVWIDGCRELIQNAAQAANGAQVFMRPRADGVLEPVDISGPWTVKTVHGAVSEALGEQIGPDTDLATLRLLCDRAGIPYLTHWDAGAVVLELYEHLVEDQTREPTFYKDFPTSVSPLTRPHRSIPGVAERWDLVAWGVELGTAYSELTDPVEQRRRLQEQSLLAAGGDPEAMELDEDFLQAMEYAMPPTGGLGMGVDRVVMLITGRSIRETLPFPLAKPR.

The tract at residues 1 to 601 (MTPTSLARAR…LLHSDGTAPD (601 aa)) is phosphatidylglycerol lysyltransferase. A run of 7 helical transmembrane segments spans residues 18–38 (VPAA…LASV), 60–80 (FPDT…ALAA), 84–104 (IAWW…IAGL), 112–132 (FAEV…AFLL), 154–174 (LVAS…LFPG), 206–226 (VFVN…TAIV), and 314–332 (AYGW…AQAF). Positions 602-1100 (GMGLQADLAD…TLPFPLAKPR (499 aa)) are lysine--tRNA ligase. The OB DNA-binding region spans 661–739 (VAVAGRVLRS…SLLVSGWRLI (79 aa)). 2 residues coordinate Mg(2+): D1012 and E1019.

This sequence in the N-terminal section; belongs to the LPG synthetase family. It in the C-terminal section; belongs to the class-II aminoacyl-tRNA synthetase family. Mg(2+) serves as cofactor.

The protein resides in the cell membrane. The enzyme catalyses tRNA(Lys) + L-lysine + ATP = L-lysyl-tRNA(Lys) + AMP + diphosphate. It catalyses the reaction L-lysyl-tRNA(Lys) + a 1,2-diacyl-sn-glycero-3-phospho-(1'-sn-glycerol) = a 1,2-diacyl-sn-glycero-3-phospho-1'-(3'-O-L-lysyl)-sn-glycerol + tRNA(Lys). Functionally, catalyzes the production of L-lysyl-tRNA(Lys)transfer and the transfer of a lysyl group from L-lysyl-tRNA(Lys) to membrane-bound phosphatidylglycerol (PG), which produces lysylphosphatidylglycerol (LPG), one of the components of the bacterial membrane with a positive net charge. LPG synthesis contributes to the resistance to cationic antimicrobial peptides (CAMPs) and likely protects M.tuberculosis against the CAMPs produced by competiting microorganisms (bacteriocins). In fact, the modification of anionic phosphatidylglycerol with positively charged L-lysine results in repulsion of the peptides. This Mycolicibacterium vanbaalenii (strain DSM 7251 / JCM 13017 / BCRC 16820 / KCTC 9966 / NRRL B-24157 / PYR-1) (Mycobacterium vanbaalenii) protein is Lysylphosphatidylglycerol biosynthesis bifunctional protein LysX (lysX).